A 55-amino-acid polypeptide reads, in one-letter code: ATP synthase F(0) complex subunit 8 (55 aa).

Residues 7-24 form a helical membrane-spanning segment; it reads SPWFFIMLTTWLTFSLII.

It belongs to the ATPase protein 8 family. As to quaternary structure, component of the ATP synthase complex composed at least of ATP5F1A/subunit alpha, ATP5F1B/subunit beta, ATP5MC1/subunit c (homooctomer), MT-ATP6/subunit a, MT-ATP8/subunit 8, ATP5ME/subunit e, ATP5MF/subunit f, ATP5MG/subunit g, ATP5MK/subunit k, ATP5MJ/subunit j, ATP5F1C/subunit gamma, ATP5F1D/subunit delta, ATP5F1E/subunit epsilon, ATP5PF/subunit F6, ATP5PB/subunit b, ATP5PD/subunit d, ATP5PO/subunit OSCP. ATP synthase complex consists of a soluble F(1) head domain (subunits alpha(3) and beta(3)) - the catalytic core - and a membrane F(0) domain - the membrane proton channel (subunits c, a, 8, e, f, g, k and j). These two domains are linked by a central stalk (subunits gamma, delta, and epsilon) rotating inside the F1 region and a stationary peripheral stalk (subunits F6, b, d, and OSCP).

It is found in the mitochondrion membrane. In terms of biological role, subunit 8, of the mitochondrial membrane ATP synthase complex (F(1)F(0) ATP synthase or Complex V) that produces ATP from ADP in the presence of a proton gradient across the membrane which is generated by electron transport complexes of the respiratory chain. ATP synthase complex consist of a soluble F(1) head domain - the catalytic core - and a membrane F(1) domain - the membrane proton channel. These two domains are linked by a central stalk rotating inside the F(1) region and a stationary peripheral stalk. During catalysis, ATP synthesis in the catalytic domain of F(1) is coupled via a rotary mechanism of the central stalk subunits to proton translocation. In vivo, can only synthesize ATP although its ATP hydrolase activity can be activated artificially in vitro. Part of the complex F(0) domain. The polypeptide is ATP synthase F(0) complex subunit 8 (Columbina passerina (Common ground-dove)).